A 31-amino-acid chain; its full sequence is Cytochrome b6-f complex subunit 6 (31 aa).

Residues 4–26 (ITSYFGFLLAALTITSALLIGLN) form a helical membrane-spanning segment.

It belongs to the PetL family. As to quaternary structure, the 4 large subunits of the cytochrome b6-f complex are cytochrome b6, subunit IV (17 kDa polypeptide, PetD), cytochrome f and the Rieske protein, while the 4 small subunits are PetG, PetL, PetM and PetN. The complex functions as a dimer.

Its subcellular location is the plastid. It is found in the chloroplast thylakoid membrane. Component of the cytochrome b6-f complex, which mediates electron transfer between photosystem II (PSII) and photosystem I (PSI), cyclic electron flow around PSI, and state transitions. PetL is important for photoautotrophic growth as well as for electron transfer efficiency and stability of the cytochrome b6-f complex. The polypeptide is Cytochrome b6-f complex subunit 6 (Amborella trichopoda).